A 395-amino-acid polypeptide reads, in one-letter code: Elongation factor Tu (395 aa).

Residues 10 to 204 (KSHVNIGTIG…AVDEYIPTPE (195 aa)) form the tr-type G domain. Residues 19–26 (GHVDHGKT) form a G1 region. 19–26 (GHVDHGKT) serves as a coordination point for GTP. Thr26 provides a ligand contact to Mg(2+). The G2 stretch occupies residues 60–64 (GITIN). Positions 81–84 (DCPG) are G3. GTP is bound by residues 81 to 85 (DCPGH) and 136 to 139 (NKMD). The G4 stretch occupies residues 136–139 (NKMD). Positions 174-176 (SAL) are G5.

This sequence belongs to the TRAFAC class translation factor GTPase superfamily. Classic translation factor GTPase family. EF-Tu/EF-1A subfamily. In terms of assembly, monomer.

Its subcellular location is the cytoplasm. It carries out the reaction GTP + H2O = GDP + phosphate + H(+). GTP hydrolase that promotes the GTP-dependent binding of aminoacyl-tRNA to the A-site of ribosomes during protein biosynthesis. The sequence is that of Elongation factor Tu from Enterococcus faecalis (strain ATCC 700802 / V583).